A 347-amino-acid chain; its full sequence is Photosystem II protein D1 (347 aa).

The next 3 membrane-spanning stretches (helical) occupy residues 32-49 (YIGW…LATV), 121-136 (HFIL…EWEF), and 145-159 (WIFV…AASA). H121 serves as a coordination point for chlorophyll a. Y129 contributes to the pheophytin a binding site. [CaMn4O5] cluster-binding residues include D173 and E192. A helical membrane pass occupies residues 200–221 (FHILGVAAVFGGSLFSAMHGSL). Position 201 (H201) interacts with chlorophyll a. A quinone is bound by residues H218 and 267–268 (SF). Fe cation is bound at residue H218. H275 is a binding site for Fe cation. The helical transmembrane segment at 277-291 (FLAAWPVIGIWFTAL) threads the bilayer. Positions 335, 336, 345, and 347 each coordinate [CaMn4O5] cluster.

It belongs to the reaction center PufL/M/PsbA/D family. As to quaternary structure, PSII is composed of 1 copy each of membrane proteins PsbA, PsbB, PsbC, PsbD, PsbE, PsbF, PsbH, PsbI, PsbJ, PsbK, PsbL, PsbM, PsbT, PsbX, PsbY, PsbZ, Psb30/Ycf12, at least 3 peripheral proteins of the oxygen-evolving complex and a large number of cofactors. It forms dimeric complexes. It depends on The D1/D2 heterodimer binds P680, chlorophylls that are the primary electron donor of PSII, and subsequent electron acceptors. It shares a non-heme iron and each subunit binds pheophytin, quinone, additional chlorophylls, carotenoids and lipids. D1 provides most of the ligands for the Mn4-Ca-O5 cluster of the oxygen-evolving complex (OEC). There is also a Cl(-1) ion associated with D1 and D2, which is required for oxygen evolution. The PSII complex binds additional chlorophylls, carotenoids and specific lipids. as a cofactor. In terms of processing, tyr-164 forms a radical intermediate that is referred to as redox-active TyrZ, YZ or Y-Z.

It is found in the plastid. Its subcellular location is the chloroplast thylakoid membrane. It catalyses the reaction 2 a plastoquinone + 4 hnu + 2 H2O = 2 a plastoquinol + O2. Its function is as follows. Photosystem II (PSII) is a light-driven water:plastoquinone oxidoreductase that uses light energy to abstract electrons from H(2)O, generating O(2) and a proton gradient subsequently used for ATP formation. It consists of a core antenna complex that captures photons, and an electron transfer chain that converts photonic excitation into a charge separation. The D1/D2 (PsbA/PsbD) reaction center heterodimer binds P680, the primary electron donor of PSII as well as several subsequent electron acceptors. The protein is Photosystem II protein D1 of Heterocapsa niei (Dinoflagellate).